The primary structure comprises 303 residues: Coenzyme PQQ synthesis protein B (303 aa).

Belongs to the PqqB family.

The protein operates within cofactor biosynthesis; pyrroloquinoline quinone biosynthesis. In terms of biological role, may be involved in the transport of PQQ or its precursor to the periplasm. The sequence is that of Coenzyme PQQ synthesis protein B from Rhizobium meliloti (strain 1021) (Ensifer meliloti).